We begin with the raw amino-acid sequence, 321 residues long: Gap junction delta-2 protein (321 aa).

Residues 1 to 19 lie on the Cytoplasmic side of the membrane; the sequence is MGEWTILERLLEAAVQQHS. Residues 20–42 form a helical membrane-spanning segment; sequence TMIGRILLTVVVIFRILIVAIVG. Residues 43 to 75 are Extracellular-facing; the sequence is ETVYDDEQTMFVCNTLQPGCNQACYDRAFPISH. A helical transmembrane segment spans residues 76-98; sequence IRYWVFQIIMVCTPSLCFITYSV. Residues 99-197 are Cytoplasmic-facing; it reads HQSAKQRERR…KLRRQEGISR (99 aa). The tract at residues 120–141 is disordered; sequence PAESIGGPGGTGGGGSGGSKRE. Over residues 125–137 the composition is skewed to gly residues; it reads GGPGGTGGGGSGG. A helical transmembrane segment spans residues 198–220; it reads FYIIQVVFRNALEIGFLVGQYFL. Residues 221–252 are Extracellular-facing; sequence YGFSVPGLYECNRYPCIKEVECYVSRPTEKTV. Residues 253–275 traverse the membrane as a helical segment; that stretch reads FLVFMFAVSGICVVLNLAELNHL. Topologically, residues 276 to 321 are cytoplasmic; sequence GWRKIKLAVRGAQAKRKSVYEIRNKDLPRVSVPNFGRTQSSDSAYV.

The protein belongs to the connexin family. Delta-type subfamily. In terms of assembly, a connexon is composed of a hexamer of connexins. Highly expressed in neurons.

It is found in the cell membrane. Its subcellular location is the cell junction. The protein localises to the gap junction. In terms of biological role, one gap junction consists of a cluster of closely packed pairs of transmembrane channels, the connexons, through which materials of low MW diffuse from one cell to a neighboring cell. This Rattus norvegicus (Rat) protein is Gap junction delta-2 protein (Gjd2).